We begin with the raw amino-acid sequence, 515 residues long: MRNLNTELDFFVSFSALKEENISQLKVYWAQSNLVELYYGESFYINIVCSRPIVDENVTTWPENEGFRIEGTLLESLVESVTSASNYPKVNAFSLMCSGIPSFIWVEDDKQYALWACLAQLDSYSYPNHKLEIHVYKHILPDLPQSSEVDRNSETEGTREENSNTSDWDEQNEYVSEVEGDYNLLGSLSNDIQFRSNPPVISGAYVFGESDVANELKDPSRKTKTRKKVFECSVPVVLKLRSYALNESNQYITSIVSPDSSCENIRILGFKAETNAATISLFAPKTPEKLQITLSSSDVFTIIHLLQIPDNIKHIELQCFCKVIVAQKLSETLVESMPFTYKHPPVLITRRTPTKTHTKQLSSSGNVSAAQSISSLNLLEISASSPSYVPSGSSFSVRANLYNPLDFSIDLLIRIPLYCYDDCLTNKEHSTSKSEEKSSELLKYPNGHTISPGIIALSTKLYTGSIFPKCEKDFDLHFLAYKPGSYDLSSISIEDVNHVVHKPRKLSKELQIIVT.

The tract at residues 146–171 is disordered; it reads SSEVDRNSETEGTREENSNTSDWDEQ. Over residues 148–162 the composition is skewed to basic and acidic residues; it reads EVDRNSETEGTREEN.

The protein resides in the cytoplasm. The protein localises to the nucleus. This is an uncharacterized protein from Schizosaccharomyces pombe (strain 972 / ATCC 24843) (Fission yeast).